A 364-amino-acid polypeptide reads, in one-letter code: DNA polymerase IV (364 aa).

The UmuC domain maps to 6 to 194 (VFHIDFDYFY…LKIRDIPGIG (189 aa)). Asp10 and Asp111 together coordinate Mg(2+). The active site involves Glu112.

This sequence belongs to the DNA polymerase type-Y family. Monomer. Mg(2+) is required as a cofactor.

It localises to the cytoplasm. It carries out the reaction DNA(n) + a 2'-deoxyribonucleoside 5'-triphosphate = DNA(n+1) + diphosphate. Functionally, poorly processive, error-prone DNA polymerase involved in untargeted mutagenesis. Copies undamaged DNA at stalled replication forks, which arise in vivo from mismatched or misaligned primer ends. These misaligned primers can be extended by PolIV. Exhibits no 3'-5' exonuclease (proofreading) activity. May be involved in translesional synthesis. This chain is DNA polymerase IV, found in Nitrosopumilus maritimus (strain SCM1).